A 195-amino-acid polypeptide reads, in one-letter code: MSRKATIERVTKETQIKLSLEIDGAGEAKICTSVPFLDHMLDLFARHGLFNLQVDARGDIDIDFHHTVEDIGIVLGQALKEALGDKKGIRRYGQASVPMDETLASVAVDISGRPYLVYHVALPKVKIGEFDVELVREFFQAVVNNLGANIHVNVMYGDNVHHMVEACFKAFARAMDQATQVDPRIEGVMSTKGKL.

Belongs to the imidazoleglycerol-phosphate dehydratase family.

It is found in the cytoplasm. The catalysed reaction is D-erythro-1-(imidazol-4-yl)glycerol 3-phosphate = 3-(imidazol-4-yl)-2-oxopropyl phosphate + H2O. It participates in amino-acid biosynthesis; L-histidine biosynthesis; L-histidine from 5-phospho-alpha-D-ribose 1-diphosphate: step 6/9. This is Imidazoleglycerol-phosphate dehydratase from Geobacter metallireducens (strain ATCC 53774 / DSM 7210 / GS-15).